The sequence spans 328 residues: Probable tRNA-dihydrouridine synthase (328 aa).

18 to 20 serves as a coordination point for FMN; the sequence is PME. The active-site Proton donor is Cys-105. FMN is bound by residues Lys-143, 208-210, and 232-233; these read NGD and GR.

The protein belongs to the Dus family. It depends on FMN as a cofactor.

It catalyses the reaction a 5,6-dihydrouridine in tRNA + NAD(+) = a uridine in tRNA + NADH + H(+). It carries out the reaction a 5,6-dihydrouridine in tRNA + NADP(+) = a uridine in tRNA + NADPH + H(+). Catalyzes the synthesis of 5,6-dihydrouridine (D), a modified base found in the D-loop of most tRNAs, via the reduction of the C5-C6 double bond in target uridines. The polypeptide is Probable tRNA-dihydrouridine synthase (dus) (Staphylococcus aureus (strain Mu50 / ATCC 700699)).